The following is a 46-amino-acid chain: Phospholipase A2 superbin c (46 aa).

Ca(2+) contacts are provided by Tyr28, Gly30, and Gly32. Cys29 and Cys45 form a disulfide bridge.

The cofactor is Ca(2+). In terms of tissue distribution, expressed by the venom gland.

The protein localises to the secreted. The catalysed reaction is a 1,2-diacyl-sn-glycero-3-phosphocholine + H2O = a 1-acyl-sn-glycero-3-phosphocholine + a fatty acid + H(+). In terms of biological role, snake venom phospholipase A2 (PLA2) that inhibits collagen-induced platelet aggregation. In terms of inhibition of platelet aggregation, superbin c is more potent as superbin d. PLA2 catalyzes the calcium-dependent hydrolysis of the 2-acyl groups in 3-sn-phosphoglycerides. The protein is Phospholipase A2 superbin c of Austrelaps superbus (Lowland copperhead snake).